The following is a 59-amino-acid chain: Large ribosomal subunit protein uL30 (59 aa).

Belongs to the universal ribosomal protein uL30 family. In terms of assembly, part of the 50S ribosomal subunit.

The sequence is that of Large ribosomal subunit protein uL30 from Buchnera aphidicola subsp. Acyrthosiphon kondoi (Acyrthosiphon kondoi symbiotic bacterium).